Here is a 318-residue protein sequence, read N- to C-terminus: NAD(P)H-dependent D-xylose reductase (318 aa).

Tyr48 (proton donor) is an active-site residue. Residue His110 participates in substrate binding. Residues 165-166, 214-223, and 270-280 contribute to the NAD(+) site; these read SN, SNFGPLSFLE, and KSTFPNTLAVN.

This sequence belongs to the aldo/keto reductase family.

It catalyses the reaction xylitol + NAD(+) = D-xylose + NADH + H(+). The enzyme catalyses xylitol + NADP(+) = D-xylose + NADPH + H(+). It participates in carbohydrate metabolism; D-xylose degradation. In terms of biological role, reduces D-xylose into xylitol. Has a preference for NADPH, but can also utilize NADH as cosubstrate. This is NAD(P)H-dependent D-xylose reductase (XYL1) from Pachysolen tannophilus (Yeast).